The primary structure comprises 212 residues: Thymidine kinase (212 aa).

ATP contacts are provided by residues 16–23 and 99–102; these read GPMFSGKS and DEAQ. Glu100 (proton acceptor) is an active-site residue.

Belongs to the thymidine kinase family. As to quaternary structure, homotetramer.

The protein resides in the cytoplasm. The catalysed reaction is thymidine + ATP = dTMP + ADP + H(+). This Deinococcus radiodurans (strain ATCC 13939 / DSM 20539 / JCM 16871 / CCUG 27074 / LMG 4051 / NBRC 15346 / NCIMB 9279 / VKM B-1422 / R1) protein is Thymidine kinase.